We begin with the raw amino-acid sequence, 82 residues long: MGILSWIIFGLIAGILAKWIMPGKDGGGFFMTILLGIVGAVVGGWISTLFGFGKVDGFNFGSFVVAVIGAIVVLFIYRKIKS.

A run of 2 helical transmembrane segments spans residues 26–46 (GGGFFMTILLGIVGAVVGGWI) and 57–77 (GFNFGSFVVAVIGAIVVLFIY).

It belongs to the UPF0410 family.

The protein localises to the cell inner membrane. The protein is UPF0410 protein YeaQ (yeaQ) of Escherichia coli O157:H7.